Consider the following 410-residue polypeptide: MVDRWYNIAADLPSVLAPPRDPDEGESRIGLLSKILPSALIDQEFTAERWVSIPEEVREAYRRVGRPTPLFRAEGLEKALGTGVRIYYKYEGVLPVGSHKLNTALAQAYYAKADGAVEVATETGAGQWGMAVSLAAALFGLRAVVFMTRSSYNSKRQRLTFMRAYGAVVYPSPSDVTEAGRRHYRPDHPGSLGIAISEAVEYVLSGERRKYLPGSVMEFVLLHQTVIGLEAVRQLPEEPDVAVACVGGGSNFAGFTYPMIGMKLRGEGFGRTRFVAVESEAAPKLTRGEYKYDFPDAVGVLPMLKMYTLGHDYVPPAIHAAGLRYHGAAPSLSLLRKLGIVEAVAYPQEEVMRAALLFARTEGIVPAPESAHAIKAAVDLAKKLPRGSVIAFNLSGHGLLDSDAYEKFLG.

At Lys100 the chain carries N6-(pyridoxal phosphate)lysine.

Belongs to the TrpB family. Tetramer of two alpha and two beta chains. Pyridoxal 5'-phosphate is required as a cofactor.

It carries out the reaction (1S,2R)-1-C-(indol-3-yl)glycerol 3-phosphate + L-serine = D-glyceraldehyde 3-phosphate + L-tryptophan + H2O. Its pathway is amino-acid biosynthesis; L-tryptophan biosynthesis; L-tryptophan from chorismate: step 5/5. Its function is as follows. The beta subunit is responsible for the synthesis of L-tryptophan from indole and L-serine. The chain is Tryptophan synthase beta chain from Pyrobaculum aerophilum (strain ATCC 51768 / DSM 7523 / JCM 9630 / CIP 104966 / NBRC 100827 / IM2).